Consider the following 59-residue polypeptide: Protein translocase subunit SecE (59 aa).

Residues 37–57 (GIGIIIIGVIGFIISIIAQLL) form a helical membrane-spanning segment.

This sequence belongs to the SecE/SEC61-gamma family. In terms of assembly, component of the Sec protein translocase complex. Heterotrimer consisting of SecY (alpha), SecG (beta) and SecE (gamma) subunits. The heterotrimers can form oligomers, although 1 heterotrimer is thought to be able to translocate proteins. Interacts with the ribosome. May interact with SecDF, and other proteins may be involved.

It is found in the cell membrane. Functionally, essential subunit of the Sec protein translocation channel SecYEG. Clamps together the 2 halves of SecY. May contact the channel plug during translocation. In Methanothermobacter thermautotrophicus (strain ATCC 29096 / DSM 1053 / JCM 10044 / NBRC 100330 / Delta H) (Methanobacterium thermoautotrophicum), this protein is Protein translocase subunit SecE.